The chain runs to 381 residues: Cytochrome b (381 aa).

4 helical membrane-spanning segments follow: residues 33–53 (FGSLLGICLIIQILTGLFLAM), 77–98 (WLLRNLHANGASMFFMCLFLHV), 113–133 (WNIGVILLLTVMATAFVGYVL), and 178–198 (FFAFHFILPFIIVAFAAVHLL). 2 residues coordinate heme b: His-83 and His-97. Heme b is bound by residues His-182 and His-196. His-201 provides a ligand contact to a ubiquinone. The next 4 membrane-spanning stretches (helical) occupy residues 226-246 (IKDALGLIFLILSLLLLGLFS), 288-308 (LGGVLALLASILILLIIPLLH), 320-340 (IFQTLFWILTADLITLTWIGG), and 347-367 (FIIIGQLALMLYFLLILALMP).

The protein belongs to the cytochrome b family. In terms of assembly, the cytochrome bc1 complex contains 11 subunits: 3 respiratory subunits (MT-CYB, CYC1 and UQCRFS1), 2 core proteins (UQCRC1 and UQCRC2) and 6 low-molecular weight proteins (UQCRH/QCR6, UQCRB/QCR7, UQCRQ/QCR8, UQCR10/QCR9, UQCR11/QCR10 and a cleavage product of UQCRFS1). This cytochrome bc1 complex then forms a dimer. Heme b serves as cofactor.

Its subcellular location is the mitochondrion inner membrane. Functionally, component of the ubiquinol-cytochrome c reductase complex (complex III or cytochrome b-c1 complex) that is part of the mitochondrial respiratory chain. The b-c1 complex mediates electron transfer from ubiquinol to cytochrome c. Contributes to the generation of a proton gradient across the mitochondrial membrane that is then used for ATP synthesis. The sequence is that of Cytochrome b (MT-CYB) from Dasykaluta rosamondae (Little red marsupial mouse).